We begin with the raw amino-acid sequence, 85 residues long: Beta-insect depressant toxin Lqh-dprIT3h (85 aa).

The first 21 residues, 1 to 21 (MKLLLLLTISASMLIEGLVNA), serve as a signal peptide directing secretion. The LCN-type CS-alpha/beta domain maps to 22-82 (DGYIRGGDGC…EWDYETDTCG (61 aa)). 4 cysteine pairs are disulfide-bonded: Cys31–Cys81, Cys35–Cys56, Cys42–Cys63, and Cys46–Cys65. The residue at position 82 (Gly82) is a Glycine amide.

This sequence belongs to the long (4 C-C) scorpion toxin superfamily. Sodium channel inhibitor family. Beta subfamily. In terms of tissue distribution, expressed by the venom gland.

It is found in the secreted. Functionally, depressant insect beta-toxins cause a transient contraction paralysis followed by a slow flaccid paralysis. They bind voltage-independently at site-4 of sodium channels (Nav) and block action potentials, primarily by depolarizing the axonal membrane and suppressing the sodium current. This depressant toxin is active only on insects. It is found in a relatively small amount in the venom. The chain is Beta-insect depressant toxin Lqh-dprIT3h from Leiurus hebraeus (Hebrew deathstalker scorpion).